A 158-amino-acid chain; its full sequence is NADH-quinone oxidoreductase subunit B (158 aa).

[4Fe-4S] cluster contacts are provided by Cys-37, Cys-38, Cys-102, and Cys-132.

Belongs to the complex I 20 kDa subunit family. As to quaternary structure, NDH-1 is composed of 14 different subunits. Subunits NuoB, C, D, E, F, and G constitute the peripheral sector of the complex. It depends on [4Fe-4S] cluster as a cofactor.

Its subcellular location is the cell inner membrane. The enzyme catalyses a quinone + NADH + 5 H(+)(in) = a quinol + NAD(+) + 4 H(+)(out). In terms of biological role, NDH-1 shuttles electrons from NADH, via FMN and iron-sulfur (Fe-S) centers, to quinones in the respiratory chain. The immediate electron acceptor for the enzyme in this species is believed to be ubiquinone. Couples the redox reaction to proton translocation (for every two electrons transferred, four hydrogen ions are translocated across the cytoplasmic membrane), and thus conserves the redox energy in a proton gradient. The chain is NADH-quinone oxidoreductase subunit B from Thiobacillus denitrificans (strain ATCC 25259 / T1).